Reading from the N-terminus, the 204-residue chain is MSDKFQDRTMAFAGICQAAYLVQKVARDGSCDEAALRESLSSILVTNPSQPLEVFNNTHLAIRDGYRALVEQLGADGSQKNAELTRYVVSLIALERKLAKRKDILNMLGERISQIGRQQQHFDLLDEQILANMASIYSDLISPIGPRIQVAGTPLFLQQPLVQHKVRALLLAGIRACVLWRQLGGSRTQIIFARKKMVELAKRY.

This sequence belongs to the HflD family.

Its subcellular location is the cytoplasm. It localises to the cell inner membrane. The protein is High frequency lysogenization protein HflD homolog of Aeromonas hydrophila subsp. hydrophila (strain ATCC 7966 / DSM 30187 / BCRC 13018 / CCUG 14551 / JCM 1027 / KCTC 2358 / NCIMB 9240 / NCTC 8049).